The following is a 460-amino-acid chain: MSFTFAIIGRPNVGKSTLFNRLVGQKLALVDDTPGVTRDRREGEGRLGDLEFTLIDTAGLDEGAKGSLTERMQQQTETAIELADALMFVFDARAGLTPNDRAFADFARRANKPVILVANKSEGKAGEIGAMESYALGLGDPVQISAEHGEGLSELYDAFRALMPEPDEEAEEDDDVEGLTEEEFSKRPIRVAIVGRPNAGKSTMINHLLGEERLLTSPEAGTTRDSIAVSVDYKGRQFRIFDTAGLRRRSRIEEKLEKLSVADALRAVRFAEVVVLMLDAQTKFEEQDLRIADLIEREGRALVIAVNKWDLVERHPGQIGALRTEADHWLPQVKGVPIVAVSGLMGEGIDRLMSAIEDSYATWNRRVPTAALNRWFEQAIQTNPPPAVSGRRLKLNYVTQAKARPPSFIVFCSRADAVPESYLRYLVNSLRNYFELPGTPVRIMLREKANPFAHKRKRPS.

2 EngA-type G domains span residues 3–167 (FTFA…PEPD) and 189–364 (IRVA…ATWN). Residues 9-16 (GRPNVGKS), 56-60 (DTAGL), 119-122 (NKSE), 195-202 (GRPNAGKS), 242-246 (DTAGL), and 307-310 (NKWD) each bind GTP. The 85-residue stretch at 365–449 (RRVPTAALNR…PVRIMLREKA (85 aa)) folds into the KH-like domain.

It belongs to the TRAFAC class TrmE-Era-EngA-EngB-Septin-like GTPase superfamily. EngA (Der) GTPase family. In terms of assembly, associates with the 50S ribosomal subunit.

Its function is as follows. GTPase that plays an essential role in the late steps of ribosome biogenesis. The sequence is that of GTPase Der from Rhodopseudomonas palustris (strain BisA53).